A 180-amino-acid chain; its full sequence is MDLEKLKEETQIIIDDVLKQTEIKSGQVFVLGLSSSEVNGGLIGHASSAEIGQVIVSVIHKTLSDKGIYLAVQACEHLNRALLIEEELADKKDWEIVSVVPQLHAGGSGQVAAYQLFKSPVEVEHIVAQAGLDIGDTSIGMHVKHVQIPVRPISKELGGAHVTALKSRPKLIGGERARYE.

This sequence belongs to the UPF0340 family.

The protein is UPF0340 protein llmg_0465 of Lactococcus lactis subsp. cremoris (strain MG1363).